The chain runs to 232 residues: Ubiquinone biosynthesis O-methyltransferase (232 aa).

Residues R36, G55, D76, and L120 each contribute to the S-adenosyl-L-methionine site.

This sequence belongs to the methyltransferase superfamily. UbiG/COQ3 family.

It catalyses the reaction a 3-demethylubiquinol + S-adenosyl-L-methionine = a ubiquinol + S-adenosyl-L-homocysteine + H(+). The enzyme catalyses a 3-(all-trans-polyprenyl)benzene-1,2-diol + S-adenosyl-L-methionine = a 2-methoxy-6-(all-trans-polyprenyl)phenol + S-adenosyl-L-homocysteine + H(+). The protein operates within cofactor biosynthesis; ubiquinone biosynthesis. Functionally, O-methyltransferase that catalyzes the 2 O-methylation steps in the ubiquinone biosynthetic pathway. The polypeptide is Ubiquinone biosynthesis O-methyltransferase (Pseudomonas savastanoi pv. phaseolicola (strain 1448A / Race 6) (Pseudomonas syringae pv. phaseolicola (strain 1448A / Race 6))).